Reading from the N-terminus, the 427-residue chain is Enolase 2 (427 aa).

A (2R)-2-phosphoglycerate-binding site is contributed by Gln165. Glu207 serves as the catalytic Proton donor. Residues Asp244, Glu287, and Asp314 each coordinate Mg(2+). (2R)-2-phosphoglycerate is bound by residues Lys339, Arg368, Ser369, and Lys390. Lys339 functions as the Proton acceptor in the catalytic mechanism.

Belongs to the enolase family. As to quaternary structure, component of the RNA degradosome, a multiprotein complex involved in RNA processing and mRNA degradation. Requires Mg(2+) as cofactor.

The protein resides in the cytoplasm. Its subcellular location is the secreted. It localises to the cell surface. The enzyme catalyses (2R)-2-phosphoglycerate = phosphoenolpyruvate + H2O. It participates in carbohydrate degradation; glycolysis; pyruvate from D-glyceraldehyde 3-phosphate: step 4/5. In terms of biological role, catalyzes the reversible conversion of 2-phosphoglycerate (2-PG) into phosphoenolpyruvate (PEP). It is essential for the degradation of carbohydrates via glycolysis. This is Enolase 2 from Pseudomonas syringae pv. tomato (strain ATCC BAA-871 / DC3000).